The chain runs to 185 residues: TRAF-interacting protein with FHA domain-containing protein A (185 aa).

Thr-9 is modified (phosphothreonine). In terms of domain architecture, FHA spans 48–104 (VKFGRNSNMCQYTFQDKQVSRVQFALQPFKQFNSSVLSFEIKNMSKKTSLMVDNQEL).

The protein belongs to the TIFA family. In terms of assembly, homooligomer; homooligomerizes following phosphorylation at Thr-9. Interacts with IRAK1, TRAF2 and TRAF6. Interacts with TIFAB; binding to TIFAB inhibits TRAF6 activation, possibly by inducing a conformational change in TIFA. Interacts with ZCCHC11; binding to ZCCHC11 suppresses the TRAF6-dependent activation of NF-kappa-B. Phosphorylated at Thr-9 following detection of ADP-D-glycero-beta-D-manno-heptose (ADP-Heptose) by ALPK1. Phosphorylation at Thr-9 by ALPK1 leads to the formation of an intermolecular binding between the FHA domain and phosphorylated Thr-9, promoting TIFA oligomerization and TIFA-mediated NF-kappa-B activation.

The protein localises to the cytoplasm. Functionally, adapter molecule that plays a key role in the activation of pro-inflammatory NF-kappa-B signaling following detection of bacterial pathogen-associated molecular pattern metabolites (PAMPs). Promotes activation of an innate immune response by inducing the oligomerization and polyubiquitination of TRAF6, which leads to the activation of TAK1 and IKK through a proteasome-independent mechanism. TIFA-dependent innate immune response is triggered by ADP-D-glycero-beta-D-manno-heptose (ADP-Heptose), a potent PAMP present in all Gram-negative and some Gram-positive bacteria: ADP-Heptose is recognized by ALPK1, which phosphorylates TIFA at Thr-9, leading to TIFA homooligomerization and subsequent activation of pro-inflammatory NF-kappa-B signaling. The polypeptide is TRAF-interacting protein with FHA domain-containing protein A (Rattus norvegicus (Rat)).